A 941-amino-acid polypeptide reads, in one-letter code: Protein translocase subunit SecA (941 aa).

ATP is bound by residues glutamine 87, 105-109 (GEGKT), and aspartate 524. The disordered stretch occupies residues 871-919 (DEQPPMPAMEAHKLDPNTGEDQVAQAQSGLAPVAPAKRDPANPATWGKV). Zn(2+)-binding residues include cysteine 925, cysteine 927, cysteine 936, and histidine 937.

Belongs to the SecA family. Monomer and homodimer. Part of the essential Sec protein translocation apparatus which comprises SecA, SecYEG and auxiliary proteins SecDF-YajC and YidC. It depends on Zn(2+) as a cofactor.

The protein resides in the cell inner membrane. It localises to the cytoplasm. It carries out the reaction ATP + H2O + cellular proteinSide 1 = ADP + phosphate + cellular proteinSide 2.. Its function is as follows. Part of the Sec protein translocase complex. Interacts with the SecYEG preprotein conducting channel. Has a central role in coupling the hydrolysis of ATP to the transfer of proteins into and across the cell membrane, serving both as a receptor for the preprotein-SecB complex and as an ATP-driven molecular motor driving the stepwise translocation of polypeptide chains across the membrane. This is Protein translocase subunit SecA from Afipia carboxidovorans (strain ATCC 49405 / DSM 1227 / KCTC 32145 / OM5) (Oligotropha carboxidovorans).